The primary structure comprises 597 residues: Aspartate--tRNA ligase (597 aa).

L-aspartate is bound at residue Glu171. Residues 195–198 form an aspartate region; that stretch reads QLFK. Arg217 is a binding site for L-aspartate. ATP is bound by residues 217–219 and Gln226; that span reads RDE. His448 contributes to the L-aspartate binding site. ATP is bound at residue Glu482. Arg489 is an L-aspartate binding site. 534 to 537 contacts ATP; the sequence is GLDR.

This sequence belongs to the class-II aminoacyl-tRNA synthetase family. Type 1 subfamily. In terms of assembly, homodimer.

The protein localises to the cytoplasm. The enzyme catalyses tRNA(Asp) + L-aspartate + ATP = L-aspartyl-tRNA(Asp) + AMP + diphosphate. Functionally, catalyzes the attachment of L-aspartate to tRNA(Asp) in a two-step reaction: L-aspartate is first activated by ATP to form Asp-AMP and then transferred to the acceptor end of tRNA(Asp). In Photobacterium profundum (strain SS9), this protein is Aspartate--tRNA ligase.